Consider the following 262-residue polypeptide: PsbP domain-containing protein 6, chloroplastic (262 aa).

Cysteine 128 and cysteine 132 are joined by a disulfide.

It belongs to the PsbP family.

Its subcellular location is the plastid. It localises to the chloroplast thylakoid lumen. Functionally, may be involved in the redox regulation of photosystem II. The chain is PsbP domain-containing protein 6, chloroplastic (PPD6) from Arabidopsis thaliana (Mouse-ear cress).